The following is a 94-amino-acid chain: Protein SKIP34 (94 aa).

The disordered stretch occupies residues 1–27 (MCYGHNQSLSSRSSLRRRSHDGEDDSV). Residues 23-61 (EDDSVVDDLRDRLAETEARLRRARAREAELSRRLEHMKR) are a coiled coil.

In terms of assembly, interacts with SPK1B/ASK2.

The chain is Protein SKIP34 (SKIP34) from Arabidopsis thaliana (Mouse-ear cress).